We begin with the raw amino-acid sequence, 91 residues long: Probable Fe(2+)-trafficking protein (91 aa).

Belongs to the Fe(2+)-trafficking protein family.

Could be a mediator in iron transactions between iron acquisition and iron-requiring processes, such as synthesis and/or repair of Fe-S clusters in biosynthetic enzymes. The protein is Probable Fe(2+)-trafficking protein of Burkholderia multivorans (strain ATCC 17616 / 249).